Reading from the N-terminus, the 31-residue chain is Cytochrome b6-f complex subunit 6 (31 aa).

The chain crosses the membrane as a helical span at residues 4–26 (ITSYFGFLLAASTITSALLIGLS).

It belongs to the PetL family. In terms of assembly, the 4 large subunits of the cytochrome b6-f complex are cytochrome b6, subunit IV (17 kDa polypeptide, PetD), cytochrome f and the Rieske protein, while the 4 small subunits are PetG, PetL, PetM and PetN. The complex functions as a dimer.

Its subcellular location is the plastid. The protein resides in the chloroplast thylakoid membrane. In terms of biological role, component of the cytochrome b6-f complex, which mediates electron transfer between photosystem II (PSII) and photosystem I (PSI), cyclic electron flow around PSI, and state transitions. PetL is important for photoautotrophic growth as well as for electron transfer efficiency and stability of the cytochrome b6-f complex. This Chloranthus spicatus (Chulantree) protein is Cytochrome b6-f complex subunit 6.